The primary structure comprises 178 residues: Fucolectin-1 (178 aa).

A signal peptide spans 1–20 (MKVKTIMLLFQILAISTIKS). Positions 29–178 (QENVAVRGKA…VEVNALLPVN (150 aa)) are F5/8 type C-like. Positions 59, 61, and 70 each coordinate Ca(2+). Disulfide bonds link cysteine 71–cysteine 167, cysteine 103–cysteine 104, and cysteine 129–cysteine 145. Alpha-L-fucose is bound by residues histidine 73 and arginine 100. A Cell attachment site motif is present at residues 100 to 102 (RGD). Arginine 107 is a binding site for alpha-L-fucose. Positions 167 and 168 each coordinate Ca(2+).

This sequence belongs to the fucolectin family. As to quaternary structure, homotrimer. In terms of tissue distribution, parenchymal hepatocytes.

It localises to the secreted. It is found in the extracellular space. Functionally, acts as a defensive agent. Recognizes blood group fucosylated oligosaccharides including A, B, H and Lewis B-type antigens. Does not recognize Lewis A antigen and has low affinity for monovalent haptens. The polypeptide is Fucolectin-1 (Anguilla japonica (Japanese eel)).